A 141-amino-acid polypeptide reads, in one-letter code: Hemoglobin subunit alpha-A (141 aa).

Residues 1 to 141 (VLSGSDKTNV…VGNVLTAKYR (141 aa)) form the Globin domain. Position 58 (H58) interacts with O2. H87 provides a ligand contact to heme b.

Belongs to the globin family. In terms of assembly, heterotetramer of two alpha chains and two beta chains. Red blood cells.

Its function is as follows. Involved in oxygen transport from the lung to the various peripheral tissues. The protein is Hemoglobin subunit alpha-A (HBAA) of Vultur gryphus (Andean condor).